The sequence spans 456 residues: Choline kinase (456 aa).

Belongs to the choline/ethanolamine kinase family. As to quaternary structure, monomer. Requires Mg(2+) as cofactor.

The protein localises to the cytoplasm. The protein resides in the nucleus. It carries out the reaction choline + ATP = phosphocholine + ADP + H(+). Its pathway is phospholipid metabolism; phosphatidylcholine biosynthesis; phosphocholine from choline: step 1/1. In terms of biological role, catalyzes the committed step in the synthesis of phosphatidylcholine by the CDP-choline pathway. The chain is Choline kinase from Schizosaccharomyces pombe (strain 972 / ATCC 24843) (Fission yeast).